The chain runs to 213 residues: Phosphatidylserine decarboxylase proenzyme (213 aa).

Ser182 functions as the Schiff-base intermediate with substrate; via pyruvic acid in the catalytic mechanism. Residue Ser182 is modified to Pyruvic acid (Ser); by autocatalysis.

It belongs to the phosphatidylserine decarboxylase family. PSD-A subfamily. In terms of assembly, heterodimer of a large membrane-associated beta subunit and a small pyruvoyl-containing alpha subunit. Pyruvate is required as a cofactor. In terms of processing, is synthesized initially as an inactive proenzyme. Formation of the active enzyme involves a self-maturation process in which the active site pyruvoyl group is generated from an internal serine residue via an autocatalytic post-translational modification. Two non-identical subunits are generated from the proenzyme in this reaction, and the pyruvate is formed at the N-terminus of the alpha chain, which is derived from the carboxyl end of the proenzyme. The post-translation cleavage follows an unusual pathway, termed non-hydrolytic serinolysis, in which the side chain hydroxyl group of the serine supplies its oxygen atom to form the C-terminus of the beta chain, while the remainder of the serine residue undergoes an oxidative deamination to produce ammonia and the pyruvoyl prosthetic group on the alpha chain.

It is found in the cell membrane. It carries out the reaction a 1,2-diacyl-sn-glycero-3-phospho-L-serine + H(+) = a 1,2-diacyl-sn-glycero-3-phosphoethanolamine + CO2. The protein operates within phospholipid metabolism; phosphatidylethanolamine biosynthesis; phosphatidylethanolamine from CDP-diacylglycerol: step 2/2. Its function is as follows. Catalyzes the formation of phosphatidylethanolamine (PtdEtn) from phosphatidylserine (PtdSer). The polypeptide is Phosphatidylserine decarboxylase proenzyme (Chlorobium phaeobacteroides (strain BS1)).